Consider the following 372-residue polypeptide: Pre-small/secreted glycoprotein (372 aa).

Positions 1 to 32 are cleaved as a signal peptide; sequence MEGLSLLQLPRDKFRKSSFFVWVIILFQKAFS. Residue Asn40 is glycosylated (N-linked (GlcNAc...) asparagine; by host). Intrachain disulfides connect Cys108–Cys135 and Cys121–Cys147. 5 N-linked (GlcNAc...) asparagine; by host glycosylation sites follow: Asn204, Asn208, Asn238, Asn257, and Asn268. The segment at 320 to 340 is disordered; it reads MRHRRELQREESPTGPPGSIR.

This sequence belongs to the filoviruses glycoprotein family. In terms of assembly, homodimer; disulfide-linked. The homodimers are linked by two disulfide bonds in a parallel orientation. Monomer. Post-translationally, this precursor is processed into mature sGP and delta-peptide by host furin or furin-like proteases. The cleavage site corresponds to the furin optimal cleavage sequence [KR]-X-[KR]-R. In terms of processing, N-glycosylated. O-glycosylated.

It localises to the secreted. Its function is as follows. Seems to possess an anti-inflammatory activity as it can reverse the barrier-decreasing effects of TNF alpha. Might therefore contribute to the lack of inflammatory reaction seen during infection in spite the of extensive necrosis and massive virus production. Does not seem to be involved in activation of primary macrophages. Does not seem to interact specifically with neutrophils. Functionally, viroporin that permeabilizes mammalian cell plasma membranes. It acts by altering permeation of ionic compounds and small molecules. This activity may lead to viral enterotoxic activity. In Sudan ebolavirus (strain Boniface-76) (SEBOV), this protein is Pre-small/secreted glycoprotein (GP).